Here is a 378-residue protein sequence, read N- to C-terminus: MIISASTDYRAAAKAKLPPFLFHYIDGGSYGEHTLRRNTDDLADIALRQRVLSDMSELSLETELFGEKMALPIALSPVGLTGMYARRGEVQAAQAAEAKGIPFTLSTVSVCPIEEVAPSIHRPIWFQLYVLKDRGFMKNVLERAKAAGVKNLVFTVDMPVPGARYRDMHSGMSGPNAAMRRVLQAMAHPSWAWDVGLLGKPHDLGNISKYRGSPTKLEDYIGWLGANFDPSISWKDLEWIRDFWDGPMIIKGILDTEDAKDAVRFGADGIVVSNHGGRQLDGVLSTVQALPAIADAVKGDLKILVDSGIRTGLDVVRMLALGADCTMLGRSFIYALAAQGRAGVENLLDLYEKEMRVAMTLTGAKSIAELSRDSLVKR.

An FMN hydroxy acid dehydrogenase domain is found at 1–378; that stretch reads MIISASTDYR…ELSRDSLVKR (378 aa). Tyr-24 contributes to the substrate binding site. The FMN site is built by Ser-106 and Gln-127. Tyr-129 is a binding site for substrate. Thr-155 contacts FMN. Residue Arg-164 coordinates substrate. Position 251 (Lys-251) interacts with FMN. Catalysis depends on His-275, which acts as the Proton acceptor. Residue Arg-278 coordinates substrate. 306–330 contributes to the FMN binding site; it reads DSGIRTGLDVVRMLALGADCTMLGR.

Belongs to the FMN-dependent alpha-hydroxy acid dehydrogenase family. FMN is required as a cofactor.

The protein resides in the cell inner membrane. It carries out the reaction (S)-lactate + A = pyruvate + AH2. In terms of biological role, catalyzes the conversion of L-lactate to pyruvate. Is coupled to the respiratory chain. This Vibrio cholerae serotype O1 (strain ATCC 39315 / El Tor Inaba N16961) protein is L-lactate dehydrogenase.